We begin with the raw amino-acid sequence, 1747 residues long: E3 ubiquitin-protein ligase listerin (1747 aa).

The segment at 1–24 (MGGKTKQAPRTKNNAKPSSSSRTA) is disordered. The segment covering 8–24 (APRTKNNAKPSSSSRTA) has biased composition (polar residues). 5 HEAT repeats span residues 65-102 (AAIS…QSDV), 106-144 (KNIL…KCKK), 346-383 (NIRK…KVTQ), 424-461 (NAYF…NVLE), and 508-547 (KFWI…ANPS). Ser566 is subject to Phosphoserine. 12 HEAT repeats span residues 612 to 653 (SRYI…LLGQ), 664 to 711 (EIVF…CAEA), 789 to 825 (SFIA…EHRP), 952 to 989 (LSRN…DPED), 1005 to 1042 (KWNE…ELVL), 1053 to 1090 (GNSS…FCPQ), 1129 to 1166 (KLSQ…NFEG), 1216 to 1258 (VEFI…SIAQ), 1269 to 1307 (VAVY…LFAK), 1330 to 1363 (FQAC…NSNI), 1364 to 1400 (TLDH…HFVA), and 1500 to 1539 (ENFL…QKDR). An RING-type zinc finger spans residues 1697-1744 (CYVCYTVIHQETCQLPKLTCKTCKKKFHGPCLYKWFTTSSKSTCPICR).

It belongs to the LTN1 family. As to quaternary structure, component of the ribosome quality control complex (RQC), composed of at least the E3 ubiquitin ligase l(3)76BDr/LTN1 and Clbn/NEMF. The complex probably also contains TCF25 as well as TER94/VCP and its ubiquitin-binding cofactors. RQC forms a stable complex with 60S ribosomal subunits.

It is found in the cytoplasm. The protein resides in the cytosol. It carries out the reaction S-ubiquitinyl-[E2 ubiquitin-conjugating enzyme]-L-cysteine + [acceptor protein]-L-lysine = [E2 ubiquitin-conjugating enzyme]-L-cysteine + N(6)-ubiquitinyl-[acceptor protein]-L-lysine.. The protein operates within protein modification; protein ubiquitination. E3 ubiquitin-protein ligase component of the ribosome quality control complex (RQC), a ribosome-associated complex that mediates ubiquitination and extraction of incompletely synthesized nascent chains for proteasomal degradation. Ubiquitination leads to TER94/VCP recruitment for extraction and degradation of the incomplete translation product. The polypeptide is E3 ubiquitin-protein ligase listerin (Drosophila melanogaster (Fruit fly)).